We begin with the raw amino-acid sequence, 129 residues long: Small ribosomal subunit protein uS11 (129 aa).

It belongs to the universal ribosomal protein uS11 family. As to quaternary structure, part of the 30S ribosomal subunit. Interacts with proteins S7 and S18. Binds to IF-3.

Its function is as follows. Located on the platform of the 30S subunit, it bridges several disparate RNA helices of the 16S rRNA. Forms part of the Shine-Dalgarno cleft in the 70S ribosome. This chain is Small ribosomal subunit protein uS11, found in Synechococcus sp. (strain RCC307).